Reading from the N-terminus, the 633-residue chain is Extracellular metalloproteinase 3 (633 aa).

The signal sequence occupies residues 1–18 (MHGLLLAGLLALPMNVLA). A propeptide spanning residues 19 to 246 (HPAEQHASNV…VHNVVDYVAS (228 aa)) is cleaved from the precursor. Asn410 carries N-linked (GlcNAc...) asparagine glycosylation. His429 is a Zn(2+) binding site. Glu430 is an active-site residue. Position 433 (His433) interacts with Zn(2+). Asn480 and Asn622 each carry an N-linked (GlcNAc...) asparagine glycan.

It belongs to the peptidase M36 family. It depends on Zn(2+) as a cofactor.

It is found in the secreted. Functionally, secreted metalloproteinase probably acting as a virulence factor. This is Extracellular metalloproteinase 3 (MEP3) from Trichophyton equinum (Horse ringworm fungus).